The sequence spans 367 residues: 7,8-didemethyl-8-hydroxy-5-deazariboflavin synthase (367 aa).

One can recognise a Radical SAM core domain in the interval leucine 39–asparagine 275. [4Fe-4S] cluster-binding residues include cysteine 53, cysteine 57, and cysteine 60.

It belongs to the radical SAM superfamily. CofG family. In terms of assembly, consists of two subunits, CofG and CofH. [4Fe-4S] cluster is required as a cofactor.

The catalysed reaction is 5-amino-5-(4-hydroxybenzyl)-6-(D-ribitylimino)-5,6-dihydrouracil + S-adenosyl-L-methionine = 7,8-didemethyl-8-hydroxy-5-deazariboflavin + 5'-deoxyadenosine + L-methionine + NH4(+) + H(+). It functions in the pathway cofactor biosynthesis; coenzyme F0 biosynthesis. Functionally, catalyzes the radical-mediated synthesis of 7,8-didemethyl-8-hydroxy-5-deazariboflavin from 5-amino-5-(4-hydroxybenzyl)-6-(D-ribitylimino)-5,6-dihydrouracil. The chain is 7,8-didemethyl-8-hydroxy-5-deazariboflavin synthase from Halobacterium salinarum (strain ATCC 29341 / DSM 671 / R1).